The sequence spans 132 residues: MIVRSFSDIENTDRHVKAASGTWESKRIVLAKEKVGFSLHETVLYAGTETSMWYANHIEAVLCTEGEAELTNDETGETHWITPGTMYLLDGHERHTMRPKTDFRCVCVFNPPVTGREDHDENGVYPLLTEEA.

The protein belongs to the ectoine synthase family.

The catalysed reaction is (2S)-4-acetamido-2-aminobutanoate = L-ectoine + H2O. It participates in amine and polyamine biosynthesis; ectoine biosynthesis; L-ectoine from L-aspartate 4-semialdehyde: step 3/3. In terms of biological role, catalyzes the circularization of gamma-N-acetyl-alpha,gamma-diaminobutyric acid (ADABA) to ectoine (1,4,5,6-tetrahydro-2-methyl-4-pyrimidine carboxylic acid), which is an excellent osmoprotectant. This is L-ectoine synthase (ectC) from Streptomyces anulatus (Streptomyces chrysomallus).